The sequence spans 293 residues: Diaminopimelate epimerase (293 aa).

3 residues coordinate substrate: asparagine 13, glutamine 46, and asparagine 66. Residue cysteine 75 is the Proton donor of the active site. Substrate-binding positions include 76-77 (GN), asparagine 162, asparagine 195, and 213-214 (ER). The active-site Proton acceptor is the cysteine 222. 223–224 (GT) serves as a coordination point for substrate.

The protein belongs to the diaminopimelate epimerase family. Homodimer.

It is found in the cytoplasm. It catalyses the reaction (2S,6S)-2,6-diaminopimelate = meso-2,6-diaminopimelate. It participates in amino-acid biosynthesis; L-lysine biosynthesis via DAP pathway; DL-2,6-diaminopimelate from LL-2,6-diaminopimelate: step 1/1. Functionally, catalyzes the stereoinversion of LL-2,6-diaminopimelate (L,L-DAP) to meso-diaminopimelate (meso-DAP), a precursor of L-lysine and an essential component of the bacterial peptidoglycan. In Psychrobacter sp. (strain PRwf-1), this protein is Diaminopimelate epimerase.